A 251-amino-acid polypeptide reads, in one-letter code: Ubiquinone/menaquinone biosynthesis C-methyltransferase UbiE (251 aa).

Residues Thr-74, Asp-95, and Asn-123–Ala-124 contribute to the S-adenosyl-L-methionine site.

Belongs to the class I-like SAM-binding methyltransferase superfamily. MenG/UbiE family.

It catalyses the reaction a 2-demethylmenaquinol + S-adenosyl-L-methionine = a menaquinol + S-adenosyl-L-homocysteine + H(+). The enzyme catalyses a 2-methoxy-6-(all-trans-polyprenyl)benzene-1,4-diol + S-adenosyl-L-methionine = a 5-methoxy-2-methyl-3-(all-trans-polyprenyl)benzene-1,4-diol + S-adenosyl-L-homocysteine + H(+). It functions in the pathway quinol/quinone metabolism; menaquinone biosynthesis; menaquinol from 1,4-dihydroxy-2-naphthoate: step 2/2. Its pathway is cofactor biosynthesis; ubiquinone biosynthesis. In terms of biological role, methyltransferase required for the conversion of demethylmenaquinol (DMKH2) to menaquinol (MKH2) and the conversion of 2-polyprenyl-6-methoxy-1,4-benzoquinol (DDMQH2) to 2-polyprenyl-3-methyl-6-methoxy-1,4-benzoquinol (DMQH2). This chain is Ubiquinone/menaquinone biosynthesis C-methyltransferase UbiE, found in Erwinia tasmaniensis (strain DSM 17950 / CFBP 7177 / CIP 109463 / NCPPB 4357 / Et1/99).